The chain runs to 305 residues: Superkiller complex protein 8 (305 aa).

Residue Met1 is modified to N-acetylmethionine. Thr2 is subject to N-acetylthreonine; in WD repeat-containing protein 61, N-terminally processed. 7 WD repeats span residues 14–57 (AHDD…LDLQ), 62–101 (GHQL…QIKS), 104–143 (AGPV…KEYS), 146–187 (TRGK…HTLE), 188–227 (GHAM…LAGT), 230–269 (GHAS…CVHT), and 272–305 (DHQD…DCPI).

The protein belongs to the SKI8 family. In terms of assembly, component of the PAF1 complex, which consists of CDC73, PAF1, LEO1, CTR9, RTF1 and SKIC8. The PAF1 complex interacts with PHF5A. Within the PAF1 complex interacts directly with PHF5A. Component of the SKI complex which consists of SKIC2, SKIC3 and SKIC8.

The protein resides in the nucleus. It is found in the cytoplasm. Functionally, component of the PAF1 complex (PAF1C) which has multiple functions during transcription by RNA polymerase II and is implicated in regulation of development and maintenance of embryonic stem cell pluripotency. PAF1C associates with RNA polymerase II through interaction with POLR2A CTD non-phosphorylated and 'Ser-2'- and 'Ser-5'-phosphorylated forms and is involved in transcriptional elongation, acting both independently and synergistically with TCEA1 and in cooperation with the DSIF complex and HTATSF1. PAF1C is required for transcription of Hox and Wnt target genes. PAF1C is involved in hematopoiesis and stimulates transcriptional activity of KMT2A/MLL1; it promotes leukemogenesis through association with KMT2A/MLL1-rearranged oncoproteins, such as KMT2A/MLL1-MLLT3/AF9 and KMT2A/MLL1-MLLT1/ENL. PAF1C is involved in histone modifications such as ubiquitination of histone H2B and methylation on histone H3 'Lys-4' (H3K4me3). PAF1C recruits the RNF20/40 E3 ubiquitin-protein ligase complex and the E2 enzyme UBE2A or UBE2B to chromatin which mediate monoubiquitination of 'Lys-120' of histone H2B (H2BK120ub1); UB2A/B-mediated H2B ubiquitination is proposed to be coupled to transcription. PAF1C is involved in mRNA 3' end formation probably through association with cleavage and poly(A) factors. In case of infection by influenza A strain H3N2, PAF1C associates with viral NS1 protein, thereby regulating gene transcription. Required for mono- and trimethylation on histone H3 'Lys-4' (H3K4me3), dimethylation on histone H3 'Lys-79' (H3K4me3). Required for Hox gene transcription. Also acts as a component of the SKI complex, a multiprotein complex that assists the RNA-degrading exosome during the mRNA decay and quality-control pathways. The SKI complex catalyzes mRNA extraction from 80S ribosomal complexes in the 3'-5' direction and channels mRNA to the cytosolic exosome for degradation. SKI-mediated extraction of mRNA from stalled ribosomes allow binding of the Pelota-HBS1L complex and subsequent ribosome disassembly by ABCE1 for ribosome recycling. The chain is Superkiller complex protein 8 from Homo sapiens (Human).